The chain runs to 380 residues: Phospho-N-acetylmuramoyl-pentapeptide-transferase (380 aa).

11 helical membrane-spanning segments follow: residues 26–46 (IVAA…LFIE), 75–95 (MGGA…ADLG), 98–118 (LVWA…WDDW), 135–155 (LVLQ…DWQP), 160–180 (GFPF…PFVP), 183–203 (LFSP…VVAT), 222–242 (IVSS…IAGF), 259–279 (LGVF…YNTY), 283–303 (VFMG…LAVL), 311–331 (AILH…VWSF), and 357–377 (KIIV…LMSL).

Belongs to the glycosyltransferase 4 family. MraY subfamily. Requires Mg(2+) as cofactor.

The protein resides in the cell inner membrane. The catalysed reaction is UDP-N-acetyl-alpha-D-muramoyl-L-alanyl-gamma-D-glutamyl-meso-2,6-diaminopimeloyl-D-alanyl-D-alanine + di-trans,octa-cis-undecaprenyl phosphate = di-trans,octa-cis-undecaprenyl diphospho-N-acetyl-alpha-D-muramoyl-L-alanyl-D-glutamyl-meso-2,6-diaminopimeloyl-D-alanyl-D-alanine + UMP. Its pathway is cell wall biogenesis; peptidoglycan biosynthesis. Its function is as follows. Catalyzes the initial step of the lipid cycle reactions in the biosynthesis of the cell wall peptidoglycan: transfers peptidoglycan precursor phospho-MurNAc-pentapeptide from UDP-MurNAc-pentapeptide onto the lipid carrier undecaprenyl phosphate, yielding undecaprenyl-pyrophosphoryl-MurNAc-pentapeptide, known as lipid I. This Anaeromyxobacter sp. (strain Fw109-5) protein is Phospho-N-acetylmuramoyl-pentapeptide-transferase.